We begin with the raw amino-acid sequence, 294 residues long: Protoheme IX farnesyltransferase (294 aa).

Helical transmembrane passes span 22–42 (VTQL…PDLP), 46–66 (IVIA…AINC), 89–109 (ITVP…MWVL), 116–136 (LTMW…TIIL), 143–163 (NIVI…AAVA), 170–190 (AWIL…ALAL), 211–231 (AFTQ…TMLP), 232–252 (FAVG…DVIF), and 272–292 (FTYS…DHYL).

It belongs to the UbiA prenyltransferase family. Protoheme IX farnesyltransferase subfamily.

The protein localises to the cell inner membrane. It catalyses the reaction heme b + (2E,6E)-farnesyl diphosphate + H2O = Fe(II)-heme o + diphosphate. The protein operates within porphyrin-containing compound metabolism; heme O biosynthesis; heme O from protoheme: step 1/1. Its function is as follows. Converts heme B (protoheme IX) to heme O by substitution of the vinyl group on carbon 2 of heme B porphyrin ring with a hydroxyethyl farnesyl side group. This chain is Protoheme IX farnesyltransferase, found in Herminiimonas arsenicoxydans.